We begin with the raw amino-acid sequence, 251 residues long: Hydroxyacylglutathione hydrolase (251 aa).

Zn(2+)-binding residues include His-53, His-55, Asp-57, His-58, His-110, Asp-127, and His-165.

Belongs to the metallo-beta-lactamase superfamily. Glyoxalase II family. As to quaternary structure, monomer. Zn(2+) is required as a cofactor.

It carries out the reaction an S-(2-hydroxyacyl)glutathione + H2O = a 2-hydroxy carboxylate + glutathione + H(+). Its pathway is secondary metabolite metabolism; methylglyoxal degradation; (R)-lactate from methylglyoxal: step 2/2. Functionally, thiolesterase that catalyzes the hydrolysis of S-D-lactoyl-glutathione to form glutathione and D-lactic acid. This Escherichia coli (strain SMS-3-5 / SECEC) protein is Hydroxyacylglutathione hydrolase.